An 89-amino-acid polypeptide reads, in one-letter code: uncharacterized protein (89 aa).

Residues 39–61 (FVCFWSIWFWTGDISFSLLSMLV) form a helical membrane-spanning segment.

Its subcellular location is the membrane. This is an uncharacterized protein from Saccharomyces cerevisiae (strain ATCC 204508 / S288c) (Baker's yeast).